A 520-amino-acid chain; its full sequence is GMP synthase [glutamine-hydrolyzing] (520 aa).

The region spanning 8–202 (RLLIIDFGSQ…FVRLAGFTGD (195 aa)) is the Glutamine amidotransferase type-1 domain. The active-site Nucleophile is the Cys-86. Catalysis depends on residues His-177 and Glu-179. Residues 203–395 (WTMDAYREQA…LGLPASFIGR (193 aa)) form the GMPS ATP-PPase domain. 230–236 (SGGVDSS) serves as a coordination point for ATP.

In terms of assembly, homodimer.

It carries out the reaction XMP + L-glutamine + ATP + H2O = GMP + L-glutamate + AMP + diphosphate + 2 H(+). It functions in the pathway purine metabolism; GMP biosynthesis; GMP from XMP (L-Gln route): step 1/1. Functionally, catalyzes the synthesis of GMP from XMP. This Dinoroseobacter shibae (strain DSM 16493 / NCIMB 14021 / DFL 12) protein is GMP synthase [glutamine-hydrolyzing].